The sequence spans 357 residues: Putative diaminopimelate epimerase, chloroplastic (357 aa).

Residues 1–47 constitute a chloroplast transit peptide; the sequence is MSSATAAATATIAAAAAAAAKLAATPAPAPSRRRLTLRGNPTARRCV. Residues C145 and C300 contribute to the active site.

The protein belongs to the diaminopimelate epimerase family.

The protein localises to the plastid. The protein resides in the chloroplast. The catalysed reaction is (2S,6S)-2,6-diaminopimelate = meso-2,6-diaminopimelate. It participates in amino-acid biosynthesis; L-lysine biosynthesis via DAP pathway; DL-2,6-diaminopimelate from LL-2,6-diaminopimelate: step 1/1. In Oryza sativa subsp. indica (Rice), this protein is Putative diaminopimelate epimerase, chloroplastic (DAPF).